Here is a 194-residue protein sequence, read N- to C-terminus: Rho-related protein racC (194 aa).

Ala17, Gly19, Lys20, Thr21, Cys22, Glu34, Tyr36, Thr39, Gly64, Lys120, Asp122, Ala163, and Lys164 together coordinate GTP. Thr21 serves as a coordination point for Mg(2+). 2 short sequence motifs (switch) span residues 30 to 41 (RKFPEDYIPTVF) and 61 to 79 (DTAGQEEYDQLRPLSYSSA). Residue Thr39 participates in Mg(2+) binding. At Cys191 the chain carries Cysteine methyl ester. Cys191 is lipidated: S-geranylgeranyl cysteine. Positions 192-194 (ALL) are cleaved as a propeptide — removed in mature form.

This sequence belongs to the small GTPase superfamily. Rho family. In terms of assembly, interacts (GTP-bound form) with PAK4 (via CRIB domain). Interacts (GTP-bound form) with PAK5 (via CRIB domain). The cofactor is Mg(2+).

It is found in the cell membrane. It localises to the cytoplasm. Its subcellular location is the cytoskeleton. It catalyses the reaction GTP + H2O = GDP + phosphate + H(+). With respect to regulation, regulated by guanine nucleotide exchange factors (GEFs) which promote the exchange of bound GDP for free GTP, GTPase activating proteins (GAPs) which increase the GTP hydrolysis activity, and GDP dissociation inhibitors which inhibit the dissociation of the nucleotide from the GTPase. Functionally, small GTPase which cycles between active GTP-bound and inactive GDP-bound states. In Entamoeba histolytica (strain ATCC 30459 / HM-1:IMSS / ABRM), this protein is Rho-related protein racC.